The chain runs to 211 residues: DNA-directed RNA polymerases I, II, and III subunit RPABC1 (211 aa).

This sequence belongs to the archaeal Rpo5/eukaryotic RPB5 RNA polymerase subunit family. Component of the RNA polymerase I (Pol I), RNA polymerase II (Pol II) and RNA polymerase III (Pol III) complexes consisting of at least 13, 12 and 17 subunits, respectively. In RNA Pol II, this subunit is present in 2-fold molar excess over the other subunits.

The protein resides in the nucleus. Functionally, DNA-dependent RNA polymerase catalyzes the transcription of DNA into RNA using the four ribonucleoside triphosphates as substrates. Common component of RNA polymerases I, II and III which synthesize ribosomal RNA precursors, mRNA precursors and many functional non-coding RNAs, and small RNAs, such as 5S rRNA and tRNAs, respectively. Pol II is the central component of the basal RNA polymerase II transcription machinery. Pols are composed of mobile elements that move relative to each other. In Pol II, RPB5 is part of the lower jaw surrounding the central large cleft and thought to grab the incoming DNA template. Seems to be the major component in this process. The protein is DNA-directed RNA polymerases I, II, and III subunit RPABC1 (rpb-5) of Caenorhabditis elegans.